We begin with the raw amino-acid sequence, 472 residues long: Diaminopimelate decarboxylase (472 aa).

Residues 1–23 (MNVHTAGPRHAEKTRHTATPQRV) are disordered. Position 97 is an N6-(pyridoxal phosphate)lysine (K97). Pyridoxal 5'-phosphate is bound by residues G283 and 325 to 328 (EPGR). The substrate site is built by R328, R369, and Y373. The active-site Proton donor is the C400. Substrate contacts are provided by E401 and Y430. Residue Y430 coordinates pyridoxal 5'-phosphate.

Belongs to the Orn/Lys/Arg decarboxylase class-II family. LysA subfamily. In terms of assembly, homodimer. Pyridoxal 5'-phosphate is required as a cofactor.

It catalyses the reaction meso-2,6-diaminopimelate + H(+) = L-lysine + CO2. It participates in amino-acid biosynthesis; L-lysine biosynthesis via DAP pathway; L-lysine from DL-2,6-diaminopimelate: step 1/1. In terms of biological role, specifically catalyzes the decarboxylation of meso-diaminopimelate (meso-DAP) to L-lysine. This Mycobacterium leprae (strain TN) protein is Diaminopimelate decarboxylase.